Here is a 471-residue protein sequence, read N- to C-terminus: UDP-N-acetylmuramoylalanine--D-glutamate ligase (471 aa).

Gly-123–Thr-129 lines the ATP pocket.

Belongs to the MurCDEF family.

It is found in the cytoplasm. The catalysed reaction is UDP-N-acetyl-alpha-D-muramoyl-L-alanine + D-glutamate + ATP = UDP-N-acetyl-alpha-D-muramoyl-L-alanyl-D-glutamate + ADP + phosphate + H(+). It functions in the pathway cell wall biogenesis; peptidoglycan biosynthesis. Functionally, cell wall formation. Catalyzes the addition of glutamate to the nucleotide precursor UDP-N-acetylmuramoyl-L-alanine (UMA). The polypeptide is UDP-N-acetylmuramoylalanine--D-glutamate ligase (Caulobacter vibrioides (strain ATCC 19089 / CIP 103742 / CB 15) (Caulobacter crescentus)).